The following is a 461-amino-acid chain: ATP synthase subunit beta (461 aa).

Residue 151–158 coordinates ATP; that stretch reads GGAGVGKT.

This sequence belongs to the ATPase alpha/beta chains family. As to quaternary structure, F-type ATPases have 2 components, CF(1) - the catalytic core - and CF(0) - the membrane proton channel. CF(1) has five subunits: alpha(3), beta(3), gamma(1), delta(1), epsilon(1). CF(0) has three main subunits: a(1), b(2) and c(9-12). The alpha and beta chains form an alternating ring which encloses part of the gamma chain. CF(1) is attached to CF(0) by a central stalk formed by the gamma and epsilon chains, while a peripheral stalk is formed by the delta and b chains.

Its subcellular location is the cell inner membrane. It carries out the reaction ATP + H2O + 4 H(+)(in) = ADP + phosphate + 5 H(+)(out). In terms of biological role, produces ATP from ADP in the presence of a proton gradient across the membrane. The catalytic sites are hosted primarily by the beta subunits. The protein is ATP synthase subunit beta of Coxiella burnetii (strain Dugway 5J108-111).